A 351-amino-acid chain; its full sequence is Sulfate/thiosulfate import ATP-binding protein CysA (351 aa).

The ABC transporter domain maps to 5–235 (IVVADATKRY…PANAFVMSFL (231 aa)). 37 to 44 (GPSGSGKS) serves as a coordination point for ATP.

This sequence belongs to the ABC transporter superfamily. Sulfate/tungstate importer (TC 3.A.1.6) family. As to quaternary structure, the complex is composed of two ATP-binding proteins (CysA), two transmembrane proteins (CysT and CysW) and a solute-binding protein (CysP).

The protein resides in the cell membrane. The catalysed reaction is sulfate(out) + ATP + H2O = sulfate(in) + ADP + phosphate + H(+). It carries out the reaction thiosulfate(out) + ATP + H2O = thiosulfate(in) + ADP + phosphate + H(+). Its function is as follows. Part of the ABC transporter complex CysAWTP involved in sulfate/thiosulfate import. Responsible for energy coupling to the transport system. The sequence is that of Sulfate/thiosulfate import ATP-binding protein CysA from Mycobacterium bovis (strain ATCC BAA-935 / AF2122/97).